Here is a 213-residue protein sequence, read N- to C-terminus: LexA repressor (213 aa).

A DNA-binding region (H-T-H motif) is located at residues 29-49; it reads VREICNAVGFKSTSTVHSYLE. Residues S136 and K173 each act as for autocatalytic cleavage activity in the active site.

Belongs to the peptidase S24 family. Homodimer.

It catalyses the reaction Hydrolysis of Ala-|-Gly bond in repressor LexA.. Its function is as follows. Represses a number of genes involved in the response to DNA damage (SOS response), including recA and lexA. In the presence of single-stranded DNA, RecA interacts with LexA causing an autocatalytic cleavage which disrupts the DNA-binding part of LexA, leading to derepression of the SOS regulon and eventually DNA repair. This is LexA repressor from Acetivibrio thermocellus (strain ATCC 27405 / DSM 1237 / JCM 9322 / NBRC 103400 / NCIMB 10682 / NRRL B-4536 / VPI 7372) (Clostridium thermocellum).